The following is a 30-amino-acid chain: ERGCPRILKQCKQDSDCPGECICMAHGFCG.

3 cysteine pairs are disulfide-bonded: cysteine 4–cysteine 21, cysteine 11–cysteine 23, and cysteine 17–cysteine 29.

It belongs to the protease inhibitor I7 (squash-type serine protease inhibitor) family.

The protein localises to the secreted. Inhibits trypsin. This is Trypsin inhibitor 3 from Momordica charantia (Bitter gourd).